We begin with the raw amino-acid sequence, 486 residues long: Glutamyl-tRNA(Gln) amidotransferase subunit A (486 aa).

Active-site charge relay system residues include Lys75 and Ser150. Ser174 serves as the catalytic Acyl-ester intermediate.

The protein belongs to the amidase family. GatA subfamily. Heterotrimer of A, B and C subunits.

The enzyme catalyses L-glutamyl-tRNA(Gln) + L-glutamine + ATP + H2O = L-glutaminyl-tRNA(Gln) + L-glutamate + ADP + phosphate + H(+). Functionally, allows the formation of correctly charged Gln-tRNA(Gln) through the transamidation of misacylated Glu-tRNA(Gln) in organisms which lack glutaminyl-tRNA synthetase. The reaction takes place in the presence of glutamine and ATP through an activated gamma-phospho-Glu-tRNA(Gln). The polypeptide is Glutamyl-tRNA(Gln) amidotransferase subunit A (Nostoc punctiforme (strain ATCC 29133 / PCC 73102)).